Consider the following 602-residue polypeptide: uncharacterized protein (602 aa).

The MCM domain occupies 271–472 (IIDILADILI…RDEEVAKYIF (202 aa)). 315-322 (TEVGIDKT) is an ATP binding site.

The protein belongs to the MCM family.

This is an uncharacterized protein from Methanocaldococcus jannaschii (strain ATCC 43067 / DSM 2661 / JAL-1 / JCM 10045 / NBRC 100440) (Methanococcus jannaschii).